Consider the following 458-residue polypeptide: Phosphoglucosamine mutase (458 aa).

Serine 106 (phosphoserine intermediate) is an active-site residue. The Mg(2+) site is built by serine 106, aspartate 247, aspartate 249, and aspartate 251. Serine 106 carries the phosphoserine modification.

This sequence belongs to the phosphohexose mutase family. It depends on Mg(2+) as a cofactor. Post-translationally, activated by phosphorylation.

The catalysed reaction is alpha-D-glucosamine 1-phosphate = D-glucosamine 6-phosphate. Functionally, catalyzes the conversion of glucosamine-6-phosphate to glucosamine-1-phosphate. The polypeptide is Phosphoglucosamine mutase (Chlamydia abortus (strain DSM 27085 / S26/3) (Chlamydophila abortus)).